The sequence spans 226 residues: ATP synthase subunit a (226 aa).

5 helical membrane passes run 17 to 37 (FLFV…AKLA), 78 to 98 (LVAT…IPGF), 104 to 124 (NINF…FEGI), 175 to 195 (LFVW…GFAL), and 201 to 221 (FLQT…AVLL).

The protein belongs to the ATPase A chain family. F-type ATPases have 2 components, CF(1) - the catalytic core - and CF(0) - the membrane proton channel. CF(1) has five subunits: alpha(3), beta(3), gamma(1), delta(1), epsilon(1). CF(0) has three main subunits: a(1), b(2) and c(9-12). The alpha and beta chains form an alternating ring which encloses part of the gamma chain. CF(1) is attached to CF(0) by a central stalk formed by the gamma and epsilon chains, while a peripheral stalk is formed by the delta and b chains.

It localises to the cell inner membrane. Its function is as follows. Key component of the proton channel; it plays a direct role in the translocation of protons across the membrane. This is ATP synthase subunit a from Nitratiruptor sp. (strain SB155-2).